The primary structure comprises 141 residues: Nucleoside diphosphate kinase (141 aa).

Residues Lys11, Phe59, Arg87, Thr93, Arg104, and Asn114 each contribute to the ATP site. The Pros-phosphohistidine intermediate role is filled by His117.

Belongs to the NDK family. In terms of assembly, homotetramer. Mg(2+) is required as a cofactor.

The protein localises to the cytoplasm. It carries out the reaction a 2'-deoxyribonucleoside 5'-diphosphate + ATP = a 2'-deoxyribonucleoside 5'-triphosphate + ADP. It catalyses the reaction a ribonucleoside 5'-diphosphate + ATP = a ribonucleoside 5'-triphosphate + ADP. In terms of biological role, major role in the synthesis of nucleoside triphosphates other than ATP. The ATP gamma phosphate is transferred to the NDP beta phosphate via a ping-pong mechanism, using a phosphorylated active-site intermediate. This Burkholderia mallei (strain NCTC 10247) protein is Nucleoside diphosphate kinase.